The sequence spans 170 residues: Large ribosomal subunit protein uL10 (170 aa).

The protein belongs to the universal ribosomal protein uL10 family. Part of the ribosomal stalk of the 50S ribosomal subunit. The N-terminus interacts with L11 and the large rRNA to form the base of the stalk. The C-terminus forms an elongated spine to which L12 dimers bind in a sequential fashion forming a multimeric L10(L12)X complex.

Its function is as follows. Forms part of the ribosomal stalk, playing a central role in the interaction of the ribosome with GTP-bound translation factors. The polypeptide is Large ribosomal subunit protein uL10 (Chlamydia abortus (strain DSM 27085 / S26/3) (Chlamydophila abortus)).